Reading from the N-terminus, the 318-residue chain is Glutathione synthetase (318 aa).

One can recognise an ATP-grasp domain in the interval 133-317; sequence KMYALQFTSV…LGQQVMAWLF (185 aa). 159 to 215 lines the ATP pocket; sequence VQQQGMAVLKPLGGKGGEGILFLQAGDRNLNSMIEISTQRGQLPVMLQEYLPAAKEG. Positions 288 and 290 each coordinate Mg(2+).

This sequence belongs to the prokaryotic GSH synthase family. Requires Mg(2+) as cofactor. The cofactor is Mn(2+).

The enzyme catalyses gamma-L-glutamyl-L-cysteine + glycine + ATP = glutathione + ADP + phosphate + H(+). It participates in sulfur metabolism; glutathione biosynthesis; glutathione from L-cysteine and L-glutamate: step 2/2. In Thermosynechococcus vestitus (strain NIES-2133 / IAM M-273 / BP-1), this protein is Glutathione synthetase.